We begin with the raw amino-acid sequence, 160 residues long: MAKQKKHPTGTIAQNKKARHDYFIEHKFEAGLVLSGWEVKSLRAGKAHLTDSYVLLKDGEAWLFGSHITPLTTASTHVIADPIRTRKLLLNKRELERLEAAVAQKGYTCVALALYWSKHLIKCEIALGKGKKEFDKRDTMRERDSNRELQRAVRNKGKED.

Residues 136–160 (KRDTMRERDSNRELQRAVRNKGKED) form a disordered region.

The protein belongs to the SmpB family.

The protein resides in the cytoplasm. Required for rescue of stalled ribosomes mediated by trans-translation. Binds to transfer-messenger RNA (tmRNA), required for stable association of tmRNA with ribosomes. tmRNA and SmpB together mimic tRNA shape, replacing the anticodon stem-loop with SmpB. tmRNA is encoded by the ssrA gene; the 2 termini fold to resemble tRNA(Ala) and it encodes a 'tag peptide', a short internal open reading frame. During trans-translation Ala-aminoacylated tmRNA acts like a tRNA, entering the A-site of stalled ribosomes, displacing the stalled mRNA. The ribosome then switches to translate the ORF on the tmRNA; the nascent peptide is terminated with the 'tag peptide' encoded by the tmRNA and targeted for degradation. The ribosome is freed to recommence translation, which seems to be the essential function of trans-translation. The chain is SsrA-binding protein from Pseudomonas putida (strain GB-1).